Here is a 299-residue protein sequence, read N- to C-terminus: Inosose dehydratase (299 aa).

The protein belongs to the IolE/MocC family. Glutathione is required as a cofactor. Requires Co(2+) as cofactor. It depends on Mn(2+) as a cofactor.

It catalyses the reaction scyllo-inosose = 3D-3,5/4-trihydroxycyclohexane-1,2-dione + H2O. Catalyzes the dehydration of inosose (2-keto-myo-inositol, 2KMI or 2,4,6/3,5-pentahydroxycyclohexanone) to 3D-(3,5/4)-trihydroxycyclohexane-1,2-dione (D-2,3-diketo-4-deoxy-epi-inositol). The polypeptide is Inosose dehydratase (Klebsiella pneumoniae (strain 342)).